Here is a 413-residue protein sequence, read N- to C-terminus: Glutamate-1-semialdehyde 2,1-aminomutase (413 aa).

Residue lysine 260 is modified to N6-(pyridoxal phosphate)lysine.

Belongs to the class-III pyridoxal-phosphate-dependent aminotransferase family. HemL subfamily. The cofactor is pyridoxal 5'-phosphate.

The protein localises to the cytoplasm. The enzyme catalyses (S)-4-amino-5-oxopentanoate = 5-aminolevulinate. The protein operates within porphyrin-containing compound metabolism; protoporphyrin-IX biosynthesis; 5-aminolevulinate from L-glutamyl-tRNA(Glu): step 2/2. This is Glutamate-1-semialdehyde 2,1-aminomutase from Methanoregula boonei (strain DSM 21154 / JCM 14090 / 6A8).